Here is a 215-residue protein sequence, read N- to C-terminus: Chymomexicain (215 aa).

3 disulfides stabilise this stretch: cysteine 22–cysteine 63, cysteine 56–cysteine 96, and cysteine 154–cysteine 201. Cysteine 25 is an active-site residue. Active-site residues include histidine 160 and asparagine 176.

It belongs to the peptidase C1 family.

Cysteine protease. The protein is Chymomexicain of Jacaratia mexicana (Wild papaya).